A 250-amino-acid chain; its full sequence is MRDEIATAVFFVTRLVKKHEKLSTQQIETFALKLMTILFEKYRGHWHPDCPSKGQAFRCIRINNNENKDPVLERACAESNVNFFHLGLPKEMTIWVDPYEVCCRYGEKKHPFTIASFKGRWENWELAQHVSCAVNRATGDCSSGTSSDEESCSREAQIIPKVNNPKSVYQVENFKQSLQPWFCLPRRKHLADGRGFLPGAACHPVPKSSKWCRPASRRVDRYHWVNAQLFSGQTAPGEPGEEALSSLKQK.

This sequence belongs to the BTG family. Interacts with CNOT7 and EIF4E. Interacts with CNOT8. In terms of tissue distribution, expressed in oocytes. Expressed in testis and in olfactory epithelium.

In terms of biological role, adapter protein that bridges CNOT7, a catalytic subunit of the CCR4-NOT complex, to EIF4E, and facilitates maternal mRNAs decay during the maturation of oocytes and in the fertilized egg. It is therefore required for the maternal-zygotic transition (MZT), zygotic cleavage and initiation of embryonic development. The polypeptide is Protein BTG4 (Btg4) (Mus musculus (Mouse)).